The sequence spans 631 residues: Shootin-1 (631 aa).

Position 1 is an N-acetylmethionine (methionine 1). 2 positions are modified to phosphoserine: serine 3 and serine 4. The stretch at 7-353 (EKQLQLITSL…RVNQSENSVP (347 aa)) forms a coiled coil. The residue at position 101 (serine 101) is a Phosphoserine; by PAK1. Serine 249 is subject to Phosphoserine. Disordered regions lie at residues 343 to 404 (KRVN…EVTD) and 417 to 508 (IKKG…KSMP). Over residues 352 to 369 (VPPPPPPPPPLPPPPPNP) the composition is skewed to pro residues. A Phosphoserine modification is found at serine 375. A compositionally biased stretch (polar residues) spans 456–465 (LNKSTSSRSL). Serine 473 is subject to Phosphoserine. Threonine 487 is modified (phosphothreonine). A compositionally biased stretch (polar residues) spans 490-505 (ADSSSPTGILATSESK). The residue at position 494 (serine 494) is a Phosphoserine. Residue threonine 496 is modified to Phosphothreonine. A phosphoserine mark is found at serine 506 and serine 515. A disordered region spans residues 530 to 631 (FNNPCPLTPE…KTGETDSSNC (102 aa)). At threonine 537 the chain carries Phosphothreonine. The segment covering 590-602 (PQTKDQAAEKDPT) has biased composition (basic and acidic residues).

Belongs to the shootin family. Interacts with L1CAM; this interaction occurs at axonal growth cones. Interacts with actin filament retrograde flow; this interaction is enhanced in a netrin-1- and PAK1-dependent manner and promotes F-actin-substrate coupling and concomitant formation of traction forces at axonal growth cones. Interacts with RUFY3. Interacts with PFN2. Interacts (via N-terminus) with KIF20B; this interaction is direct and promotes the association of SHTN1 to microtubules in primary neurons. Associates with microtubule. Post-translationally, phosphorylated on Ser-101 and Ser-249 by PAK1 through a CDC42- and RAC1-dependent signaling pathway, which enhances its association with F-actin retrograde flow in filopodia and lamellipodia of axonal growth cones. Phosphorylation on Ser-101 and Ser-249 is increased by netrin-1. Expressed in hippocampal neurons.

The protein resides in the perikaryon. The protein localises to the cell projection. It is found in the axon. It localises to the growth cone. Its subcellular location is the cytoplasm. The protein resides in the cytoskeleton. The protein localises to the filopodium. It is found in the lamellipodium. Involved in the generation of internal asymmetric signals required for neuronal polarization and neurite outgrowth. Mediates netrin-1-induced F-actin-substrate coupling or 'clutch engagement' within the axon growth cone through activation of CDC42, RAC1 and PAK1-dependent signaling pathway, thereby converting the F-actin retrograde flow into traction forces, concomitantly with filopodium extension and axon outgrowth. Plays a role in cytoskeletal organization by regulating the subcellular localization of phosphoinositide 3-kinase (PI3K) activity at the axonal growth cone. Also plays a role in regenerative neurite outgrowth. In the developing cortex, cooperates with KIF20B to promote both the transition from the multipolar to the bipolar stage and the radial migration of cortical neurons from the ventricular zone toward the superficial layer of the neocortex. Involved in the accumulation of phosphatidylinositol 3,4,5-trisphosphate (PIP3) in the growth cone of primary hippocampal neurons. The chain is Shootin-1 from Mus musculus (Mouse).